Here is a 75-residue protein sequence, read N- to C-terminus: Exodeoxyribonuclease 7 small subunit (75 aa).

The protein belongs to the XseB family. In terms of assembly, heterooligomer composed of large and small subunits.

Its subcellular location is the cytoplasm. It catalyses the reaction Exonucleolytic cleavage in either 5'- to 3'- or 3'- to 5'-direction to yield nucleoside 5'-phosphates.. Its function is as follows. Bidirectionally degrades single-stranded DNA into large acid-insoluble oligonucleotides, which are then degraded further into small acid-soluble oligonucleotides. The sequence is that of Exodeoxyribonuclease 7 small subunit from Listeria innocua serovar 6a (strain ATCC BAA-680 / CLIP 11262).